The chain runs to 429 residues: Choline kinase A2 (429 aa).

Residues 82 to 88 (KGGMSNM), arginine 111, 152 to 158 (EYIPSRP), and glutamine 257 contribute to the ATP site. 84-86 (GMS) serves as a coordination point for substrate. Residue glutamate 258 participates in Ca(2+) binding. Aspartate 301 is an ATP binding site. Ca(2+) is bound by residues glutamate 320 and isoleucine 323.

Belongs to the choline/ethanolamine kinase family. Homodimer. A small proportion exists as higher oligomers. The cofactor is Mg(2+).

It carries out the reaction choline + ATP = phosphocholine + ADP + H(+). The catalysed reaction is ethanolamine + ATP = phosphoethanolamine + ADP + H(+). Its pathway is phospholipid metabolism; phosphatidylcholine biosynthesis; phosphocholine from choline: step 1/1. The protein operates within phospholipid metabolism; phosphatidylethanolamine biosynthesis; phosphatidylethanolamine from ethanolamine: step 1/3. With respect to regulation, inhibited by Ca(2+). Mild inhibition by high levels of Mg(2+)(&gt;10 mM). Its function is as follows. Catalyzes the first step in phosphatidylcholine biosynthesis. May contribute to phosphatidylethanolamine biosynthesis. Phosphorylates choline and ethanolamine but the activity is much higher with choline. The protein is Choline kinase A2 of Caenorhabditis elegans.